The chain runs to 279 residues: Thymidylate synthase (279 aa).

Arginine 133–arginine 134 provides a ligand contact to dUMP. Cysteine 154 (nucleophile) is an active-site residue. DUMP contacts are provided by residues arginine 178–aspartate 181, asparagine 189, and histidine 219–tyrosine 221. Aspartate 181 contacts (6R)-5,10-methylene-5,6,7,8-tetrahydrofolate. Residue alanine 278 coordinates (6R)-5,10-methylene-5,6,7,8-tetrahydrofolate.

This sequence belongs to the thymidylate synthase family. Bacterial-type ThyA subfamily. As to quaternary structure, homodimer.

The protein resides in the cytoplasm. The enzyme catalyses dUMP + (6R)-5,10-methylene-5,6,7,8-tetrahydrofolate = 7,8-dihydrofolate + dTMP. Its pathway is pyrimidine metabolism; dTTP biosynthesis. Its function is as follows. Catalyzes the reductive methylation of 2'-deoxyuridine-5'-monophosphate (dUMP) to 2'-deoxythymidine-5'-monophosphate (dTMP) while utilizing 5,10-methylenetetrahydrofolate (mTHF) as the methyl donor and reductant in the reaction, yielding dihydrofolate (DHF) as a by-product. This enzymatic reaction provides an intracellular de novo source of dTMP, an essential precursor for DNA biosynthesis. This Streptococcus pyogenes serotype M12 (strain MGAS2096) protein is Thymidylate synthase.